A 367-amino-acid chain; its full sequence is tRNA-specific 2-thiouridylase MnmA (367 aa).

ATP-binding positions include 9–16 (GLSGGVDS) and M35. The tract at residues 95-97 (NPD) is interaction with target base in tRNA. C100 (nucleophile) is an active-site residue. A disulfide bond links C100 and C196. G124 lines the ATP pocket. Residues 146–148 (KDQ) form an interaction with tRNA region. The active-site Cysteine persulfide intermediate is the C196. The interaction with tRNA stretch occupies residues 308 to 309 (RY).

This sequence belongs to the MnmA/TRMU family.

The protein localises to the cytoplasm. It catalyses the reaction S-sulfanyl-L-cysteinyl-[protein] + uridine(34) in tRNA + AH2 + ATP = 2-thiouridine(34) in tRNA + L-cysteinyl-[protein] + A + AMP + diphosphate + H(+). Its function is as follows. Catalyzes the 2-thiolation of uridine at the wobble position (U34) of tRNA, leading to the formation of s(2)U34. The protein is tRNA-specific 2-thiouridylase MnmA of Nitrosococcus oceani (strain ATCC 19707 / BCRC 17464 / JCM 30415 / NCIMB 11848 / C-107).